The chain runs to 165 residues: MAKGGNKKATAAARAAANRLLADNRLARHQYEILDTLETGIELVGTEVKSIRAGQANLRDGFCLIRKGELQLHNVHISPHSHAGSYFNHDPLRTRKLLAHRREIDKLRGQLDRKGLTLIPLNLHLKGSWIKLTIGLGKGRKLHDKRQDEKRKQADREVKSALARY.

The segment at 141-165 (KLHDKRQDEKRKQADREVKSALARY) is disordered. Residues 145–159 (KRQDEKRKQADREVK) are compositionally biased toward basic and acidic residues.

It belongs to the SmpB family.

The protein localises to the cytoplasm. In terms of biological role, required for rescue of stalled ribosomes mediated by trans-translation. Binds to transfer-messenger RNA (tmRNA), required for stable association of tmRNA with ribosomes. tmRNA and SmpB together mimic tRNA shape, replacing the anticodon stem-loop with SmpB. tmRNA is encoded by the ssrA gene; the 2 termini fold to resemble tRNA(Ala) and it encodes a 'tag peptide', a short internal open reading frame. During trans-translation Ala-aminoacylated tmRNA acts like a tRNA, entering the A-site of stalled ribosomes, displacing the stalled mRNA. The ribosome then switches to translate the ORF on the tmRNA; the nascent peptide is terminated with the 'tag peptide' encoded by the tmRNA and targeted for degradation. The ribosome is freed to recommence translation, which seems to be the essential function of trans-translation. The polypeptide is SsrA-binding protein (Prochlorococcus marinus (strain MIT 9313)).